Reading from the N-terminus, the 454-residue chain is Argininosuccinate synthase (454 aa).

ATP contacts are provided by residues 17 to 25 and Ala43; that span reads AFSGGLDTS. Position 99 (Tyr99) interacts with L-citrulline. The ATP site is built by Gly129 and Thr131. L-aspartate-binding residues include Thr131, Asn135, and Asp136. Position 135 (Asn135) interacts with L-citrulline. An ATP-binding site is contributed by Asp136. The L-citrulline site is built by Arg139 and Ser192. Asp194 contributes to the ATP binding site. The L-citrulline site is built by Thr201, Glu203, and Glu280.

It belongs to the argininosuccinate synthase family. Type 2 subfamily. In terms of assembly, homotetramer.

Its subcellular location is the cytoplasm. It carries out the reaction L-citrulline + L-aspartate + ATP = 2-(N(omega)-L-arginino)succinate + AMP + diphosphate + H(+). It functions in the pathway amino-acid biosynthesis; L-arginine biosynthesis; L-arginine from L-ornithine and carbamoyl phosphate: step 2/3. In Yersinia enterocolitica serotype O:8 / biotype 1B (strain NCTC 13174 / 8081), this protein is Argininosuccinate synthase.